The following is a 185-amino-acid chain: MSPVDRLREALPDAARDVRLNLQAVLQGGALTEGQRWGVAVASAAAARQPALLSAVLAEARSRGLDSAAEDGLAAAALMAMNNVYYRFRHMVGKPGYTEMPARLRMGRLAQPATSRADLELFSLAASAINGCEACVRTHEDVVVKGGIGEEAVHDAVRIAAVIHAAAVALEAGEVAGGHEAVSAA.

The active-site Proton donor is Cys-132. A disulfide bridge connects residues Cys-132 and Cys-135. Cys-135 acts as the Cysteine sulfenic acid (-SOH) intermediate in catalysis.

It belongs to the AhpD family.

It carries out the reaction N(6)-[(R)-dihydrolipoyl]-L-lysyl-[lipoyl-carrier protein] + a hydroperoxide = N(6)-[(R)-lipoyl]-L-lysyl-[lipoyl-carrier protein] + an alcohol + H2O. Antioxidant protein with alkyl hydroperoxidase activity. Required for the reduction of the AhpC active site cysteine residues and for the regeneration of the AhpC enzyme activity. The sequence is that of Alkyl hydroperoxide reductase AhpD from Anaeromyxobacter sp. (strain Fw109-5).